The following is a 177-amino-acid chain: Large ribosomal subunit protein bL9 (177 aa).

The protein belongs to the bacterial ribosomal protein bL9 family.

Its function is as follows. Binds to the 23S rRNA. This chain is Large ribosomal subunit protein bL9, found in Rhodopirellula baltica (strain DSM 10527 / NCIMB 13988 / SH1).